Consider the following 517-residue polypeptide: Maturase K (517 aa).

Belongs to the intron maturase 2 family. MatK subfamily.

It is found in the plastid. Its subcellular location is the chloroplast. Its function is as follows. Usually encoded in the trnK tRNA gene intron. Probably assists in splicing its own and other chloroplast group II introns. This chain is Maturase K, found in Acer pseudoplatanus (Sycamore maple).